A 1209-amino-acid chain; its full sequence is 3',5'-cyclic-AMP phosphodiesterase, isoform I (1209 aa).

7 disordered regions span residues 16–35 (NVAKHRGSGSSNGTGNGSGT), 59–82 (GGGSGSGGGGCGSGSGSGSGKRKS), 275–353 (LYSG…PLPP), 372–403 (SATSSSAGTVPPGGQQTQEYIAGTSSTPSPRI), 442–498 (ETLA…MQAE), 626–655 (VPASNKSRRPNQSSSASRSGNPPGAPLSQG), and 754–792 (SAGQYARSRSPRGPPMSQISGVKRPLSHTNSFTGERLPT). Gly residues-rich tracts occupy residues 25-35 (SSNGTGNGSGT) and 59-77 (GGGSGSGGGGCGSGSGSGS). Polar residues predominate over residues 275 to 290 (LYSGSNPSTNPCQSAV). The span at 291 to 314 (QNQGQNSNPNPNQNPNTNPNQNQQ) shows a compositional bias: low complexity. A compositionally biased stretch (polar residues) spans 315-324 (RCSCQPQTSP). Residues 372–383 (SATSSSAGTVPP) are compositionally biased toward low complexity. A compositionally biased stretch (polar residues) spans 385–400 (GQQTQEYIAGTSSTPS). 2 stretches are compositionally biased toward low complexity: residues 445-462 (ASSSTTGGTATTTQNSSS) and 472-483 (TSSSASALATSH). Polar residues-rich tracts occupy residues 484-498 (PSNSQLLPTSKMQAE) and 627-645 (PASNKSRRPNQSSSASRSG). The 330-residue stretch at 795–1124 (VETPRENELG…DYYQSMIPPS (330 aa)) folds into the PDEase domain. The active-site Proton donor is the histidine 871. Residue 871–875 (HNSLH) participates in 3',5'-cyclic AMP binding. A divalent metal cation contacts are provided by histidine 875, histidine 911, aspartate 912, and aspartate 1029. Aspartate 912, aspartate 1029, and glutamine 1080 together coordinate 3',5'-cyclic AMP. The span at 1146-1163 (EESDQENLAELEEGDESG) shows a compositional bias: acidic residues. Positions 1146–1209 (EESDQENLAE…CQNQPQHGGM (64 aa)) are disordered. The span at 1164–1181 (GESTTTGTTGTTAASALS) shows a compositional bias: low complexity. Positions 1182-1193 (GAGGGGGGGGGM) are enriched in gly residues. The span at 1199 to 1209 (GCQNQPQHGGM) shows a compositional bias: polar residues.

It belongs to the cyclic nucleotide phosphodiesterase family. PDE4 subfamily. In terms of assembly, monomer. A divalent metal cation is required as a cofactor.

The catalysed reaction is 3',5'-cyclic AMP + H2O = AMP + H(+). The protein operates within purine metabolism; 3',5'-cyclic AMP degradation; AMP from 3',5'-cyclic AMP: step 1/1. Its function is as follows. Hydrolyzes the second messenger cAMP, which is a key regulator of many important physiological processes. Vital for female fertility. Required for learning/memory. The chain is 3',5'-cyclic-AMP phosphodiesterase, isoform I from Drosophila melanogaster (Fruit fly).